The primary structure comprises 524 residues: ORC1-type DNA replication protein 4 (524 aa).

The span at 1-23 (MTDKSNNPAPASDPSTTETSNDA) shows a compositional bias: polar residues. Residues 1–67 (MTDKSNNPAP…DDPSDEASRG (67 aa)) form a disordered region. ATP-binding positions include 128-132 (TGKTA), Y325, and R337.

This sequence belongs to the CDC6/cdc18 family.

Involved in regulation of DNA replication. The sequence is that of ORC1-type DNA replication protein 4 (cdc6d) from Haloarcula marismortui (strain ATCC 43049 / DSM 3752 / JCM 8966 / VKM B-1809) (Halobacterium marismortui).